Consider the following 429-residue polypeptide: Glutamate-1-semialdehyde 2,1-aminomutase (429 aa).

Lysine 267 bears the N6-(pyridoxal phosphate)lysine mark.

This sequence belongs to the class-III pyridoxal-phosphate-dependent aminotransferase family. HemL subfamily. Homodimer. It depends on pyridoxal 5'-phosphate as a cofactor.

It is found in the cytoplasm. The enzyme catalyses (S)-4-amino-5-oxopentanoate = 5-aminolevulinate. It functions in the pathway porphyrin-containing compound metabolism; protoporphyrin-IX biosynthesis; 5-aminolevulinate from L-glutamyl-tRNA(Glu): step 2/2. This Xanthomonas euvesicatoria pv. vesicatoria (strain 85-10) (Xanthomonas campestris pv. vesicatoria) protein is Glutamate-1-semialdehyde 2,1-aminomutase.